A 72-amino-acid polypeptide reads, in one-letter code: Translation initiation factor IF-1 (72 aa).

One can recognise an S1-like domain in the interval 1–72 (MTKEDSFEMH…SKGRIIFRSR (72 aa)).

It belongs to the IF-1 family. Component of the 30S ribosomal translation pre-initiation complex which assembles on the 30S ribosome in the order IF-2 and IF-3, IF-1 and N-formylmethionyl-tRNA(fMet); mRNA recruitment can occur at any time during PIC assembly.

Its subcellular location is the cytoplasm. Its function is as follows. One of the essential components for the initiation of protein synthesis. Stabilizes the binding of IF-2 and IF-3 on the 30S subunit to which N-formylmethionyl-tRNA(fMet) subsequently binds. Helps modulate mRNA selection, yielding the 30S pre-initiation complex (PIC). Upon addition of the 50S ribosomal subunit IF-1, IF-2 and IF-3 are released leaving the mature 70S translation initiation complex. This chain is Translation initiation factor IF-1, found in Blochmanniella pennsylvanica (strain BPEN).